Here is a 216-residue protein sequence, read N- to C-terminus: GTP-binding nuclear protein Ran, testis-specific isoform (216 aa).

A2 bears the N-acetylalanine mark. One can recognise a Small GTPase Ran-type domain in the interval 7 to 171; sequence PQVQFKVVLV…FWLARKLIGD (165 aa). Residue 17–24 participates in GTP binding; sequence GDGGTGKT. T24 is subject to Phosphothreonine. The switch-I stretch occupies residues 37 to 45; the sequence is KEYVATLGV. K60 is subject to N6-acetyllysine. 65–69 contributes to the GTP binding site; sequence DTAGQ. A switch-II region spans residues 68–84; that stretch reads GQEKFGGLRDGYYIQAQ. K71 carries the N6-acetyllysine; alternate modification. Residue K71 forms a Glycyl lysine isopeptide (Lys-Gly) (interchain with G-Cter in SUMO2); alternate linkage. K71 participates in a covalent cross-link: Glycyl lysine isopeptide (Lys-Gly) (interchain with G-Cter in ubiquitin); alternate. At K99 the chain carries N6-acetyllysine. 122–125 is a binding site for GTP; the sequence is NKVD. K134 carries the N6-acetyllysine modification. K159 carries the N6-acetyllysine; alternate modification. K159 is modified (N6-succinyllysine; alternate).

This sequence belongs to the small GTPase superfamily. Ran family. Testis specific.

It is found in the nucleus. It carries out the reaction GTP + H2O = GDP + phosphate + H(+). Functionally, GTP-binding protein involved in nucleocytoplasmic transport. Required for the import of protein into the nucleus and also for RNA export. Involved in chromatin condensation and control of cell cycle. The polypeptide is GTP-binding nuclear protein Ran, testis-specific isoform (Rasl2-9) (Mus musculus (Mouse)).